Reading from the N-terminus, the 406-residue chain is Cysteine desulfurase (406 aa).

K226 carries the N6-(pyridoxal phosphate)lysine modification. C364 acts as the Cysteine persulfide intermediate in catalysis.

Belongs to the class-V pyridoxal-phosphate-dependent aminotransferase family. Csd subfamily. As to quaternary structure, homodimer. Interacts with SufE and the SufBCD complex composed of SufB, SufC and SufD. The interaction with SufE is required to mediate the direct transfer of the sulfur atom from the S-sulfanylcysteine. Requires pyridoxal 5'-phosphate as cofactor.

Its subcellular location is the cytoplasm. The catalysed reaction is (sulfur carrier)-H + L-cysteine = (sulfur carrier)-SH + L-alanine. It carries out the reaction L-selenocysteine + AH2 = hydrogenselenide + L-alanine + A + H(+). It participates in cofactor biosynthesis; iron-sulfur cluster biosynthesis. Its function is as follows. Cysteine desulfurases mobilize the sulfur from L-cysteine to yield L-alanine, an essential step in sulfur metabolism for biosynthesis of a variety of sulfur-containing biomolecules. Component of the suf operon, which is activated and required under specific conditions such as oxidative stress and iron limitation. Acts as a potent selenocysteine lyase in vitro, that mobilizes selenium from L-selenocysteine. Selenocysteine lyase activity is however unsure in vivo. This is Cysteine desulfurase from Escherichia coli O9:H4 (strain HS).